We begin with the raw amino-acid sequence, 429 residues long: ATP-dependent RNA helicase RhlB (429 aa).

Positions 9-37 (DKFAQMGLEPEVLAGLESKGFHYCTPIQA) match the Q motif motif. The Helicase ATP-binding domain maps to 40 to 219 (LPLLVEGHDL…YEHMNHPEHV (180 aa)). Residue 53 to 60 (AQTGTGKT) participates in ATP binding. A DEAD box motif is present at residues 165–168 (DEAD). The 148-residue stretch at 243–390 (KMLLLLSLME…VSKYDREALL (148 aa)) folds into the Helicase C-terminal domain. The interval 399 to 429 (VFRNRQPVNRNMRDRQGGGNSNNRRRPPRKS) is disordered.

It belongs to the DEAD box helicase family. RhlB subfamily. In terms of assembly, component of the RNA degradosome, which is a multiprotein complex involved in RNA processing and mRNA degradation.

It is found in the cytoplasm. The catalysed reaction is ATP + H2O = ADP + phosphate + H(+). In terms of biological role, DEAD-box RNA helicase involved in RNA degradation. Has RNA-dependent ATPase activity and unwinds double-stranded RNA. The sequence is that of ATP-dependent RNA helicase RhlB from Aeromonas hydrophila subsp. hydrophila (strain ATCC 7966 / DSM 30187 / BCRC 13018 / CCUG 14551 / JCM 1027 / KCTC 2358 / NCIMB 9240 / NCTC 8049).